The chain runs to 434 residues: MNITFIGSGYVGLVSGIIMGYLGHNVTCFDNDDVKISKLNKKILPIYEAKLDEYLKQALESDRLKFTNIYSNDFRNVDAVFITVGTPSKELGEADLKYVYDAVDKVSKHINKDCLIVIKSTVPPGSCNNIIAYLKAKGFSFNVASNPEFLREGSAVEDFLYPDRIVVGVNNQESEALLRTIYAPLIEQGVKFLVTNLVTSELIKYASNSFLATKIAFINEMADLCEKIGANIKDLSQGVGLDQRIGRNFLNAGPGFGGSCFPKDILALNNLVENYKIDCKILKSVIKSNKLRPGNMVAKIATLLDGDLKGRNIAILGLTYKAGTDDVRASPAIEIITILLNKDVYVKAFDPIGLENAKKNLEHKNLLYFASAVEACESVDIIVIATEWSEFKELNWQEIYDLVKSPMIIDLRNILDNEVMKKIGFRYYAVGSKI.

NAD(+) is bound by residues 2 to 19 (NITF…GIIM), V11, D30, K35, T121, and E152. Residues 148 to 152 (EFLRE), K204, N208, 249 to 253 (FLNAG), and G257 each bind substrate. C260 (nucleophile) is an active-site residue. K263 is a binding site for NAD(+). Residue K321 participates in substrate binding. Position 328 (R328) interacts with NAD(+).

Belongs to the UDP-glucose/GDP-mannose dehydrogenase family.

It carries out the reaction UDP-alpha-D-glucose + 2 NAD(+) + H2O = UDP-alpha-D-glucuronate + 2 NADH + 3 H(+). The protein operates within nucleotide-sugar biosynthesis; UDP-alpha-D-glucuronate biosynthesis; UDP-alpha-D-glucuronate from UDP-alpha-D-glucose: step 1/1. The sequence is that of UDP-glucose 6-dehydrogenase (udg) from Rickettsia typhi (strain ATCC VR-144 / Wilmington).